A 282-amino-acid chain; its full sequence is Probable endonuclease 4 (282 aa).

The Zn(2+) site is built by His-66, His-106, Glu-143, Asp-177, His-180, His-214, Asp-227, His-229, and Glu-259.

It belongs to the AP endonuclease 2 family. It depends on Zn(2+) as a cofactor.

It carries out the reaction Endonucleolytic cleavage to 5'-phosphooligonucleotide end-products.. Functionally, endonuclease IV plays a role in DNA repair. It cleaves phosphodiester bonds at apurinic or apyrimidinic (AP) sites, generating a 3'-hydroxyl group and a 5'-terminal sugar phosphate. The sequence is that of Probable endonuclease 4 from Nitratidesulfovibrio vulgaris (strain DP4) (Desulfovibrio vulgaris).